The following is a 300-amino-acid chain: LysM and putative peptidoglycan-binding domain-containing protein 3 (300 aa).

Residues 1 to 216 are Extracellular-facing; it reads MAGRNQNRTA…PYYGADWGMG (216 aa). N-linked (GlcNAc...) asparagine glycosylation is found at asparagine 7 and asparagine 26. The residue at position 55 (serine 55) is a Phosphoserine. The LysM domain maps to 65 to 109; the sequence is LTKDIQEGDTLNAVALQYCCTVADIKRVNNLISDQDFFALRSIKI. The tract at residues 136-157 is disordered; it reads PYFQEQDTVPANDSPSSSESAG. The span at 140–156 shows a compositional bias: polar residues; it reads EQDTVPANDSPSSSESA. Asparagine 199 is a glycosylation site (N-linked (GlcNAc...) asparagine). The helical transmembrane segment at 217–237 threads the bilayer; it reads WWTAVVIMLIVGIITPVFYLL. The Cytoplasmic segment spans residues 238-300; that stretch reads YYEILAKVDV…LYRQDPQARD (63 aa). Residues 253–300 form a disordered region; that stretch reads VDSSHLHPGLTPPSHHREMGNAIGPTKGIPVGQQDDHRLYRQDPQARD. A compositionally biased stretch (basic and acidic residues) spans 286–300; sequence QDDHRLYRQDPQARD.

It is found in the cell membrane. Its subcellular location is the golgi apparatus. In terms of biological role, essential for Golgi structural integrity. The polypeptide is LysM and putative peptidoglycan-binding domain-containing protein 3 (Lysmd3) (Rattus norvegicus (Rat)).